Reading from the N-terminus, the 437-residue chain is Protein arginine methyltransferase NDUFAF7, mitochondrial (437 aa).

Residues 1-42 constitute a mitochondrion transit peptide; the sequence is MSGLARLQRLQKFGFLMVSASANRPIQRYQCSRTEKPQKRTS.

It belongs to the NDUFAF7 family.

It is found in the mitochondrion. The catalysed reaction is L-arginyl-[protein] + 2 S-adenosyl-L-methionine = N(omega),N(omega)'-dimethyl-L-arginyl-[protein] + 2 S-adenosyl-L-homocysteine + 2 H(+). Arginine methyltransferase involved in the assembly or stability of mitochondrial NADH:ubiquinone oxidoreductase complex (complex I). Acts by mediating symmetric dimethylation of 'Arg-118' of ndufs2 after it assembles into the complex I, stabilizing the early intermediate complex. In Xenopus laevis (African clawed frog), this protein is Protein arginine methyltransferase NDUFAF7, mitochondrial.